Here is a 360-residue protein sequence, read N- to C-terminus: Carbamoyl phosphate synthase small chain (360 aa).

Positions 1-169 (MTKRLLILED…TKTAYPAPGI (169 aa)) are CPSase. 3 residues coordinate L-glutamine: serine 46, glycine 220, and glycine 222. The region spanning 172 to 358 (NIVLVDFGLK…LEMIDSWRCT (187 aa)) is the Glutamine amidotransferase type-1 domain. Residue cysteine 247 is the Nucleophile of the active site. L-glutamine-binding residues include methionine 248, glutamine 251, asparagine 289, glycine 291, and tyrosine 292. Residues histidine 331 and aspartate 333 contribute to the active site.

It belongs to the CarA family. As to quaternary structure, composed of two chains; the small (or glutamine) chain promotes the hydrolysis of glutamine to ammonia, which is used by the large (or ammonia) chain to synthesize carbamoyl phosphate. Tetramer of heterodimers (alpha,beta)4.

The catalysed reaction is hydrogencarbonate + L-glutamine + 2 ATP + H2O = carbamoyl phosphate + L-glutamate + 2 ADP + phosphate + 2 H(+). The enzyme catalyses L-glutamine + H2O = L-glutamate + NH4(+). The protein operates within amino-acid biosynthesis; L-arginine biosynthesis; carbamoyl phosphate from bicarbonate: step 1/1. Its pathway is pyrimidine metabolism; UMP biosynthesis via de novo pathway; (S)-dihydroorotate from bicarbonate: step 1/3. Small subunit of the glutamine-dependent carbamoyl phosphate synthetase (CPSase). CPSase catalyzes the formation of carbamoyl phosphate from the ammonia moiety of glutamine, carbonate, and phosphate donated by ATP, constituting the first step of 2 biosynthetic pathways, one leading to arginine and/or urea and the other to pyrimidine nucleotides. The small subunit (glutamine amidotransferase) binds and cleaves glutamine to supply the large subunit with the substrate ammonia. The sequence is that of Carbamoyl phosphate synthase small chain from Streptococcus pyogenes serotype M18 (strain MGAS8232).